The sequence spans 182 residues: NADH-quinone oxidoreductase subunit B 1 (182 aa).

Residues Cys47, Cys48, Cys113, and Cys142 each contribute to the [4Fe-4S] cluster site.

It belongs to the complex I 20 kDa subunit family. As to quaternary structure, NDH-1 is composed of 14 different subunits. Subunits NuoB, C, D, E, F, and G constitute the peripheral sector of the complex. [4Fe-4S] cluster is required as a cofactor.

The protein localises to the cell inner membrane. It carries out the reaction a quinone + NADH + 5 H(+)(in) = a quinol + NAD(+) + 4 H(+)(out). In terms of biological role, NDH-1 shuttles electrons from NADH, via FMN and iron-sulfur (Fe-S) centers, to quinones in the respiratory chain. Couples the redox reaction to proton translocation (for every two electrons transferred, four hydrogen ions are translocated across the cytoplasmic membrane), and thus conserves the redox energy in a proton gradient. This is NADH-quinone oxidoreductase subunit B 1 from Anaeromyxobacter dehalogenans (strain 2CP-C).